A 215-amino-acid polypeptide reads, in one-letter code: 3-isopropylmalate dehydratase small subunit (215 aa).

This sequence belongs to the LeuD family. LeuD type 1 subfamily. Heterodimer of LeuC and LeuD.

It carries out the reaction (2R,3S)-3-isopropylmalate = (2S)-2-isopropylmalate. Its pathway is amino-acid biosynthesis; L-leucine biosynthesis; L-leucine from 3-methyl-2-oxobutanoate: step 2/4. Functionally, catalyzes the isomerization between 2-isopropylmalate and 3-isopropylmalate, via the formation of 2-isopropylmaleate. The sequence is that of 3-isopropylmalate dehydratase small subunit from Xanthomonas oryzae pv. oryzae (strain MAFF 311018).